The sequence spans 96 residues: (4S)-4-hydroxy-5-phosphonooxypentane-2,3-dione isomerase (96 aa).

In terms of domain architecture, ABM spans 2–91 (HVTLVEINVH…MTGPRTKKVF (90 aa)).

This sequence belongs to the LsrG family. As to quaternary structure, homodimer.

It is found in the cytoplasm. It carries out the reaction (2S)-2-hydroxy-3,4-dioxopentyl phosphate = 3-hydroxy-2,4-dioxopentyl phosphate. Involved in the degradation of phospho-AI-2, thereby terminating induction of the lsr operon and closing the AI-2 signaling cycle. Catalyzes the conversion of (4S)-4-hydroxy-5-phosphonooxypentane-2,3-dione (P-DPD) to 3-hydroxy-5-phosphonooxypentane-2,4-dione (P-HPD). The polypeptide is (4S)-4-hydroxy-5-phosphonooxypentane-2,3-dione isomerase (Salmonella choleraesuis (strain SC-B67)).